A 514-amino-acid polypeptide reads, in one-letter code: Protein translocase subunit SecD (514 aa).

5 helical membrane passes run 7–27 (WKIFLSIICTIFAVICALPNF), 357–377 (IIGFAAVCIFMVWSYGLLGLF), 389–409 (VLALLSLFQATLTLPGIAGII), 448–470 (FATILDSNLTTLIVAFLLYIFGV), and 482–502 (IGIISSMFSAIIITKLLIDIW).

This sequence belongs to the SecD/SecF family. SecD subfamily. As to quaternary structure, forms a complex with SecF. Part of the essential Sec protein translocation apparatus which comprises SecA, SecYEG and auxiliary proteins SecDF-YajC and YidC.

The protein localises to the cell inner membrane. Functionally, part of the Sec protein translocase complex. Interacts with the SecYEG preprotein conducting channel. SecDF uses the proton motive force (PMF) to complete protein translocation after the ATP-dependent function of SecA. In Rickettsia bellii (strain RML369-C), this protein is Protein translocase subunit SecD.